Reading from the N-terminus, the 156-residue chain is Cyanate hydratase (156 aa).

Residues R96, E99, and S122 contribute to the active site.

Belongs to the cyanase family.

It carries out the reaction cyanate + hydrogencarbonate + 3 H(+) = NH4(+) + 2 CO2. Catalyzes the reaction of cyanate with bicarbonate to produce ammonia and carbon dioxide. The protein is Cyanate hydratase of Burkholderia lata (strain ATCC 17760 / DSM 23089 / LMG 22485 / NCIMB 9086 / R18194 / 383).